The chain runs to 342 residues: S-adenosylmethionine:tRNA ribosyltransferase-isomerase (342 aa).

This sequence belongs to the QueA family. As to quaternary structure, monomer.

It localises to the cytoplasm. It carries out the reaction 7-aminomethyl-7-carbaguanosine(34) in tRNA + S-adenosyl-L-methionine = epoxyqueuosine(34) in tRNA + adenine + L-methionine + 2 H(+). It functions in the pathway tRNA modification; tRNA-queuosine biosynthesis. In terms of biological role, transfers and isomerizes the ribose moiety from AdoMet to the 7-aminomethyl group of 7-deazaguanine (preQ1-tRNA) to give epoxyqueuosine (oQ-tRNA). This Streptococcus pneumoniae serotype 19F (strain G54) protein is S-adenosylmethionine:tRNA ribosyltransferase-isomerase.